A 128-amino-acid chain; its full sequence is Phosphoribosyl-AMP cyclohydrolase (128 aa).

Asp94 contacts Mg(2+). Cys95 contacts Zn(2+). 2 residues coordinate Mg(2+): Asp96 and Asp98. Residues Cys111 and Cys118 each coordinate Zn(2+).

It belongs to the PRA-CH family. Homodimer. Requires Mg(2+) as cofactor. Zn(2+) is required as a cofactor.

It localises to the cytoplasm. The enzyme catalyses 1-(5-phospho-beta-D-ribosyl)-5'-AMP + H2O = 1-(5-phospho-beta-D-ribosyl)-5-[(5-phospho-beta-D-ribosylamino)methylideneamino]imidazole-4-carboxamide. Its pathway is amino-acid biosynthesis; L-histidine biosynthesis; L-histidine from 5-phospho-alpha-D-ribose 1-diphosphate: step 3/9. Its function is as follows. Catalyzes the hydrolysis of the adenine ring of phosphoribosyl-AMP. This is Phosphoribosyl-AMP cyclohydrolase from Streptomyces coelicolor (strain ATCC BAA-471 / A3(2) / M145).